The following is a 112-amino-acid chain: Conotoxin vil14.4 (112 aa).

The signal sequence occupies residues 1 to 22 (MGFRVLVLVVMATTSALPFTFF). Residues 23–85 (EEPGRSPFRP…FAELSVGQRR (63 aa)) constitute a propeptide that is removed on maturation. Intrachain disulfides connect Cys-91–Cys-111 and Cys-95–Cys-107.

The protein belongs to the conotoxin R superfamily. Expressed by the venom duct.

It is found in the secreted. The chain is Conotoxin vil14.4 from Conus villepinii (Villepin's cone).